The chain runs to 314 residues: DNA-directed RNA polymerase subunit alpha (314 aa).

Residues 1-228 are alpha N-terminal domain (alpha-NTD); that stretch reads MIEIEKPRIE…EHLNIFVGLT (228 aa). The interval 245–314 is alpha C-terminal domain (alpha-CTD); sequence KEKVLEMSIE…DLGLGLRKED (70 aa).

This sequence belongs to the RNA polymerase alpha chain family. Homodimer. The RNAP catalytic core consists of 2 alpha, 1 beta, 1 beta' and 1 omega subunit. When a sigma factor is associated with the core the holoenzyme is formed, which can initiate transcription.

It carries out the reaction RNA(n) + a ribonucleoside 5'-triphosphate = RNA(n+1) + diphosphate. In terms of biological role, DNA-dependent RNA polymerase catalyzes the transcription of DNA into RNA using the four ribonucleoside triphosphates as substrates. In Staphylococcus aureus (strain bovine RF122 / ET3-1), this protein is DNA-directed RNA polymerase subunit alpha.